Consider the following 341-residue polypeptide: Protein pelota homolog (341 aa).

It belongs to the eukaryotic release factor 1 family. Pelota subfamily. As to quaternary structure, monomer. The cofactor is a divalent metal cation.

The protein localises to the cytoplasm. Functionally, may function in recognizing stalled ribosomes, interact with stem-loop structures in stalled mRNA molecules, and effect endonucleolytic cleavage of the mRNA. May play a role in the release non-functional ribosomes and degradation of damaged mRNAs. Has endoribonuclease activity. This is Protein pelota homolog from Methanospirillum hungatei JF-1 (strain ATCC 27890 / DSM 864 / NBRC 100397 / JF-1).